A 136-amino-acid polypeptide reads, in one-letter code: Histone H3.3 (136 aa).

The segment at 1-41 (MARTKQTARKSTGGKAPRKQLASKAARKSAPVTGGVKKPHR) is disordered. K5 bears the N6,N6,N6-trimethyllysine; alternate mark. Residue K5 is modified to N6,N6-dimethyllysine; alternate. 2 positions are modified to N6-methyllysine; alternate: K5 and K10. Residue K10 is modified to N6-acetyllysine; alternate. S11 bears the Phosphoserine mark. At K15 the chain carries N6,N6-dimethyllysine; alternate. An N6-acetyllysine; alternate mark is found at K15, K19, K24, K28, and K37. N6-methyllysine; alternate occurs at positions 19, 24, 28, and 37. N6,N6,N6-trimethyllysine; alternate is present on residues K28 and K37. K28 and K37 each carry N6,N6-dimethyllysine; alternate. 2 positions are modified to N6-acetyllysine: K57 and K65. K80 carries the post-translational modification N6,N6,N6-trimethyllysine; alternate. The residue at position 80 (K80) is an N6,N6-dimethyllysine; alternate. At K80 the chain carries N6-methyllysine; alternate.

The protein belongs to the histone H3 family. In terms of assembly, the nucleosome is a histone octamer containing two molecules each of H2A, H2B, H3 and H4 assembled in one H3-H4 heterotetramer and two H2A-H2B heterodimers. The octamer wraps approximately 147 bp of DNA. Post-translationally, phosphorylated to form H3S10ph. H3S10ph promotes subsequent H3K14ac formation and is required for transcriptional activation through TBP recruitment to the promoters. Mono-, di- and trimethylated by the COMPASS complex to form H3K4me1/2/3. H3K4me activates gene expression by regulating transcription elongation and plays a role in telomere length maintenance. H3K4me enrichment correlates with transcription levels, and occurs in a 5' to 3' gradient with H3K4me3 enrichment at the 5'-end of genes, shifting to H3K4me2 and then H3K4me1. Methylated by SET2 to form H3K36me. H3K36me represses gene expression. Methylated by DOT1 to form H3K79me. H3K79me is required for association of SIR proteins with telomeric regions and for telomeric silencing. The COMPASS-mediated formation of H3K4me2/3 and the DOT1-mediated formation of H3K79me require H2BK123ub1. In terms of processing, acetylation of histone H3 leads to transcriptional activation. H3K14ac formation by GCN5 is promoted by H3S10ph. H3K14ac can also be formed by ESA1. H3K56ac formation occurs predominantly in newly synthesized H3 molecules during G1, S and G2/M of the cell cycle and may be involved in DNA repair.

It is found in the nucleus. The protein localises to the chromosome. Its function is as follows. Core component of nucleosome. Nucleosomes wrap and compact DNA into chromatin, limiting DNA accessibility to the cellular machineries which require DNA as a template. Histones thereby play a central role in transcription regulation, DNA repair, DNA replication and chromosomal stability. DNA accessibility is regulated via a complex set of post-translational modifications of histones, also called histone code, and nucleosome remodeling. This is Histone H3.3 (HHT3) from Meyerozyma guilliermondii (strain ATCC 6260 / CBS 566 / DSM 6381 / JCM 1539 / NBRC 10279 / NRRL Y-324) (Yeast).